Reading from the N-terminus, the 193-residue chain is MNKIFVILTALILSGCATKLTQLNVPTQLEYNGKHYVLTGSQDFETIARYVYIAKPDTLENWQSEIEILFDRNQPERSIKERIALRERIYRNTGVKDFHFDAIPENSTNPNELNGYVIYSPTKENPSWQVNVMKGRQLSQCGFVQFQYSQKIQQPTRSKHLSVNKVQRHLQKYIVDIERKHLQNLKWQLFCEK.

This is an uncharacterized protein from Haemophilus influenzae (strain ATCC 51907 / DSM 11121 / KW20 / Rd).